A 718-amino-acid chain; its full sequence is Quinohemoprotein alcohol dehydrogenase ADH-IIG (718 aa).

An N-terminal signal peptide occupies residues 1 to 29 (MRQTGLASLPLKSLAVAVLLSLAGTPALA). Glu-92 serves as a coordination point for pyrroloquinoline quinone. A disulfide bridge links Cys-138 with Cys-139. Pyrroloquinoline quinone contacts are provided by residues Arg-144, Thr-189, and 205–206 (GA). Glu-207 contacts Ca(2+). Residue Thr-264 coordinates pyrroloquinoline quinone. Residues Asn-284 and Asp-329 each contribute to the Ca(2+) site. Asp-329 (proton acceptor) is an active-site residue. Lys-356 is a pyrroloquinoline quinone binding site. Trp-415 contributes to the substrate binding site. Residues 419 to 420 (DW) and Ala-571 contribute to the pyrroloquinoline quinone site. The 78-residue stretch at 622–699 (ASIEAGAKLY…QIHQYLIKRA (78 aa)) folds into the Cytochrome c domain. 4 residues coordinate heme c: Cys-635, Cys-638, His-639, and Met-676.

It belongs to the bacterial PQQ dehydrogenase family. In terms of assembly, monomer. It depends on pyrroloquinoline quinone as a cofactor. Ca(2+) is required as a cofactor. Requires heme c as cofactor.

Its subcellular location is the periplasm. The enzyme catalyses 2 oxidized [azurin] + a primary alcohol = 2 reduced [azurin] + an aldehyde + 2 H(+). Exhibits higher affinity for 1-butanol compared to 1,2-propanediol but inhibited by 10 mM 1-butanol. Functionally, catalyzes the dye-linked oxidation of primary alcohols to the corresponding aldehydes and the (subsequent) oxidation of the aldehydes to carboxylic acids. Active with primary alcohols, glycerol, 1,2-propanediol, 1,3-propanediol but not with methanol or sugar alcohols such as D-sorbitol. The protein is Quinohemoprotein alcohol dehydrogenase ADH-IIG of Pseudomonas putida (Arthrobacter siderocapsulatus).